The following is a 722-amino-acid chain: Biotin--protein ligase (722 aa).

The disordered stretch occupies residues 27-93 (KELGKASDKQ…EPAADGDPGL (67 aa)). Residues 46-55 (ASPEAQPAQG) are compositionally biased toward low complexity. Position 295 is a phosphoserine (S295). Positions 459–648 (TRLGKVILFA…VLEKLIDRFQ (190 aa)) constitute a BPL/LPL catalytic domain.

This sequence belongs to the biotin--protein ligase family. As to quaternary structure, monomer.

The protein localises to the cytoplasm. It localises to the mitochondrion. The catalysed reaction is apo-[methylmalonyl-CoA:pyruvate carboxytransferase] + biotin + ATP = holo-[methylmalonyl-CoA:pyruvate carboxytransferase] + AMP + diphosphate + H(+). It catalyses the reaction apo-[propionyl-CoA:carbon-dioxide ligase (ADP-forming)] + biotin + ATP = holo-[propionyl-CoA:carbon-dioxide ligase (ADP-forming)] + AMP + diphosphate + H(+). The enzyme catalyses apo-[3-methylcrotonoyl-CoA:carbon-dioxide ligase (ADP-forming)] + biotin + ATP = holo-[3-methylcrotonoyl-CoA:carbon-dioxide ligase (ADP-forming)] + AMP + diphosphate + H(+). It carries out the reaction biotin + L-lysyl-[protein] + ATP = N(6)-biotinyl-L-lysyl-[protein] + AMP + diphosphate + H(+). Its function is as follows. Biotin--protein ligase catalyzing the biotinylation of the 4 biotin-dependent carboxylases acetyl-CoA-carboxylase, pyruvate carboxylase, propionyl-CoA carboxylase, and methylcrotonyl-CoA carboxylase. This is Biotin--protein ligase from Mus musculus (Mouse).